The following is a 113-amino-acid chain: Cell cycle protein GpsB (113 aa).

Positions 36 to 68 (LDMVIKDYSTFTQEIEALQAENIRLVQELDNAP) form a coiled coil.

It belongs to the GpsB family. As to quaternary structure, forms polymers through the coiled coil domains. Interacts with PBP1, MreC and EzrA.

It localises to the cytoplasm. Functionally, divisome component that associates with the complex late in its assembly, after the Z-ring is formed, and is dependent on DivIC and PBP2B for its recruitment to the divisome. Together with EzrA, is a key component of the system that regulates PBP1 localization during cell cycle progression. Its main role could be the removal of PBP1 from the cell pole after pole maturation is completed. Also contributes to the recruitment of PBP1 to the division complex. Not essential for septum formation. The chain is Cell cycle protein GpsB from Listeria monocytogenes serotype 4b (strain CLIP80459).